Reading from the N-terminus, the 69-residue chain is MAESRQTRLQVKCPTCQTAVVWEPENAFRPFCSQRCKLIDLGGWADGKYTVSGQTESLPEISEPDMAYR.

Zn(2+) is bound by residues C13, C16, C32, and C36.

The protein belongs to the DNA gyrase inhibitor YacG family. Interacts with GyrB. Zn(2+) serves as cofactor.

Inhibits all the catalytic activities of DNA gyrase by preventing its interaction with DNA. Acts by binding directly to the C-terminal domain of GyrB, which probably disrupts DNA binding by the gyrase. The sequence is that of DNA gyrase inhibitor YacG from Neisseria meningitidis serogroup A / serotype 4A (strain DSM 15465 / Z2491).